The following is a 216-amino-acid chain: Maleylacetoacetate isomerase (216 aa).

N-acetylmethionine is present on M1. Residues 4-87 (GKPVLYSYFR…YLEETRPIPR (84 aa)) form the GST N-terminal domain. Glutathione is bound by residues 14–19 (SSCSWR) and Q45. The residue at position 57 (K57) is an N6-succinyllysine. Glutathione is bound by residues V59, 71-72 (QS), Q111, and 115-117 (NLS). The 121-residue stretch at 92 to 212 (DPQKRAIVRM…HPCRQPDTPA (121 aa)) folds into the GST C-terminal domain. T136 carries the phosphothreonine modification. S137 is subject to Phosphoserine. K177 carries the N6-succinyllysine modification. S181 carries the phosphoserine modification.

The protein belongs to the GST superfamily. Zeta family. In terms of assembly, homodimer. Requires glutathione as cofactor. The N-terminus is blocked.

The protein resides in the cytoplasm. The catalysed reaction is 4-maleylacetoacetate = 4-fumarylacetoacetate. It catalyses the reaction RX + glutathione = an S-substituted glutathione + a halide anion + H(+). It functions in the pathway amino-acid degradation; L-phenylalanine degradation; acetoacetate and fumarate from L-phenylalanine: step 5/6. Functionally, probable bifunctional enzyme showing minimal glutathione-conjugating activity with ethacrynic acid and 7-chloro-4-nitrobenz-2-oxa-1, 3-diazole and maleylacetoacetate isomerase activity. Also has low glutathione peroxidase activity with t-butyl and cumene hydroperoxides. Is able to catalyze the glutathione dependent oxygenation of dichloroacetic acid to glyoxylic acid. The sequence is that of Maleylacetoacetate isomerase (Gstz1) from Rattus norvegicus (Rat).